The sequence spans 238 residues: Protein odd-skipped-related 2 (238 aa).

The disordered stretch occupies residues 105–126 (EDPPVTGQSRLSPERRPARGRL). 3 C2H2-type zinc fingers span residues 134-156 (FICR…ERTH), 162-184 (YTCD…RYIH), and 190-212 (FKCQ…KTLH).

This sequence belongs to the Odd C2H2-type zinc-finger protein family. In terms of tissue distribution, at the 8-somite stage, expressed in the pronephros, with weak generalized expression elsewhere. At 24 hpf, expressed in the kidney tubules and the anterior duct, and also in the gut. At 60 hpf, expressed in the tubules and the pectoral fin buds.

Its subcellular location is the nucleus. In terms of biological role, transcriptional repressor. Required for pronephric kidney development. In Danio rerio (Zebrafish), this protein is Protein odd-skipped-related 2.